The following is a 120-amino-acid chain: Large ribosomal subunit protein bL19 (120 aa).

The protein belongs to the bacterial ribosomal protein bL19 family.

Its function is as follows. This protein is located at the 30S-50S ribosomal subunit interface and may play a role in the structure and function of the aminoacyl-tRNA binding site. In Acaryochloris marina (strain MBIC 11017), this protein is Large ribosomal subunit protein bL19.